We begin with the raw amino-acid sequence, 505 residues long: Cytochrome P450 9b1 (505 aa).

Position 449 (cysteine 449) interacts with heme.

This sequence belongs to the cytochrome P450 family. Heme is required as a cofactor.

The protein resides in the endoplasmic reticulum membrane. The protein localises to the microsome membrane. Its function is as follows. May be involved in the metabolism of insect hormones and in the breakdown of synthetic insecticides. This chain is Cytochrome P450 9b1 (Cyp9b1), found in Drosophila melanogaster (Fruit fly).